A 129-amino-acid chain; its full sequence is Phosphoribosyl-AMP cyclohydrolase (129 aa).

Residue D76 participates in Mg(2+) binding. C77 is a binding site for Zn(2+). D78 and D80 together coordinate Mg(2+). C97 and C104 together coordinate Zn(2+).

The protein belongs to the PRA-CH family. In terms of assembly, homodimer. It depends on Mg(2+) as a cofactor. The cofactor is Zn(2+).

Its subcellular location is the cytoplasm. It carries out the reaction 1-(5-phospho-beta-D-ribosyl)-5'-AMP + H2O = 1-(5-phospho-beta-D-ribosyl)-5-[(5-phospho-beta-D-ribosylamino)methylideneamino]imidazole-4-carboxamide. The protein operates within amino-acid biosynthesis; L-histidine biosynthesis; L-histidine from 5-phospho-alpha-D-ribose 1-diphosphate: step 3/9. Its function is as follows. Catalyzes the hydrolysis of the adenine ring of phosphoribosyl-AMP. The protein is Phosphoribosyl-AMP cyclohydrolase of Leptothrix cholodnii (strain ATCC 51168 / LMG 8142 / SP-6) (Leptothrix discophora (strain SP-6)).